Here is a 230-residue protein sequence, read N- to C-terminus: Carbohydrate deacetylase (230 aa).

Residues His-59 and His-123 each coordinate Mg(2+).

Belongs to the YdjC deacetylase family. Homodimer. It depends on Mg(2+) as a cofactor.

Probably catalyzes the deacetylation of acetylated carbohydrates an important step in the degradation of oligosaccharides. This is Carbohydrate deacetylase from Oceanobacillus iheyensis (strain DSM 14371 / CIP 107618 / JCM 11309 / KCTC 3954 / HTE831).